We begin with the raw amino-acid sequence, 151 residues long: MAPKAEKKPAAKKPAEEEPATEKVEKAPAGKKPKAEKRLPAGKSKEGGEGKKGKKKAKKSVETYKIYIFKVLKQVHPDIGISSKAMSIMNSFINDIFEKLAAESAKLARYNKKPTITSREIQTSVRLVLPGELAKHAVSEGTKAVTKFTSS.

2 stretches are compositionally biased toward basic and acidic residues: residues 1-28 and 36-51; these read MAPK…EKAP and EKRL…GEGK. The segment at 1-58 is disordered; the sequence is MAPKAEKKPAAKKPAEEEPATEKVEKAPAGKKPKAEKRLPAGKSKEGGEGKKGKKKAK. Residues lysine 7 and lysine 37 each carry the N6-acetyllysine modification. Residue lysine 147 forms a Glycyl lysine isopeptide (Lys-Gly) (interchain with G-Cter in ubiquitin) linkage.

It belongs to the histone H2B family. As to quaternary structure, the nucleosome is a histone octamer containing two molecules each of H2A, H2B, H3 and H4 assembled in one H3-H4 heterotetramer and two H2A-H2B heterodimers. The octamer wraps approximately 147 bp of DNA. In terms of processing, can be acetylated to form H2BK6ac and H2BK33ac. Post-translationally, monoubiquitinated to form H2BK143ub1; may give a specific tag for epigenetic transcriptional activation.

It localises to the nucleus. Its subcellular location is the chromosome. Core component of nucleosome. Nucleosomes wrap and compact DNA into chromatin, limiting DNA accessibility to the cellular machineries which require DNA as a template. Histones thereby play a central role in transcription regulation, DNA repair, DNA replication and chromosomal stability. DNA accessibility is regulated via a complex set of post-translational modifications of histones, also called histone code, and nucleosome remodeling. This is Histone H2B.1 from Zea mays (Maize).